The sequence spans 252 residues: Tabtoxin biosynthesis enzyme (252 aa).

Residues 1–23 (MYQRTATQLARKPASKQGETEMN) are disordered.

Its function is as follows. May play a role in tabtoxin biosynthesis. This chain is Tabtoxin biosynthesis enzyme (tblA), found in Pseudomonas amygdali pv. tabaci (Pseudomonas syringae pv. tabaci).